The primary structure comprises 274 residues: Large ribosomal subunit protein uL2 (274 aa).

Residues 223-274 (VVMNPVDHPHGGGEGRTSGGRHPVSPWGVPTKGFKTRKNKRTDKYIVRRRTK) are disordered. Residues 256 to 274 (FKTRKNKRTDKYIVRRRTK) show a composition bias toward basic residues.

The protein belongs to the universal ribosomal protein uL2 family. As to quaternary structure, part of the 50S ribosomal subunit. Forms a bridge to the 30S subunit in the 70S ribosome.

Its function is as follows. One of the primary rRNA binding proteins. Required for association of the 30S and 50S subunits to form the 70S ribosome, for tRNA binding and peptide bond formation. It has been suggested to have peptidyltransferase activity; this is somewhat controversial. Makes several contacts with the 16S rRNA in the 70S ribosome. The polypeptide is Large ribosomal subunit protein uL2 (Vibrio atlanticus (strain LGP32) (Vibrio splendidus (strain Mel32))).